The primary structure comprises 231 residues: MIKDERWEGVYSFEDSPYLMETLTDLRKISTENISFRKGLVRLGRYMGYELTKTMEFEKMPIQTPLEKTEGVFAKDRKNVVIITILRAAFPLMEGLIKNFESAKVGIVSASRGHAPDFKIEMNYIKVPQLNPEDTVIVSDPMIATGSTLIHVLKEFRDSKPKRMMIVGVLAAPEGINAVKKEFSDVEIFVTKIDENLNKDGYIVPGLGDAGDRAFGEPFKVPMLPQMHNLE.

38–42 (KGLVR) contacts GTP. 5-phospho-alpha-D-ribose 1-diphosphate-binding positions include Arg-87, Arg-112, and 140-148 (DPMIATGST). Uracil-binding positions include Ile-203 and 208–210 (GDA). Asp-209 serves as a coordination point for 5-phospho-alpha-D-ribose 1-diphosphate.

This sequence belongs to the UPRTase family. Mg(2+) is required as a cofactor.

The enzyme catalyses UMP + diphosphate = 5-phospho-alpha-D-ribose 1-diphosphate + uracil. It participates in pyrimidine metabolism; UMP biosynthesis via salvage pathway; UMP from uracil: step 1/1. Its activity is regulated as follows. Allosterically activated by GTP. Functionally, catalyzes the conversion of uracil and 5-phospho-alpha-D-ribose 1-diphosphate (PRPP) to UMP and diphosphate. This is Uracil phosphoribosyltransferase from Methanococcus maripaludis (strain C5 / ATCC BAA-1333).